A 276-amino-acid chain; its full sequence is 2-dehydro-3-deoxyphosphooctonate aldolase (276 aa).

This sequence belongs to the KdsA family.

It is found in the cytoplasm. It carries out the reaction D-arabinose 5-phosphate + phosphoenolpyruvate + H2O = 3-deoxy-alpha-D-manno-2-octulosonate-8-phosphate + phosphate. Its pathway is carbohydrate biosynthesis; 3-deoxy-D-manno-octulosonate biosynthesis; 3-deoxy-D-manno-octulosonate from D-ribulose 5-phosphate: step 2/3. It participates in bacterial outer membrane biogenesis; lipopolysaccharide biosynthesis. The protein is 2-dehydro-3-deoxyphosphooctonate aldolase of Xanthomonas oryzae pv. oryzae (strain MAFF 311018).